The chain runs to 795 residues: MSKRHRLDLGEDYPSGKKRAGTDGKDRERDRDREDRSKDRDRERDRGDREREREKEKEKELRASTNAMLISAGLPPLKASHSAHSTHSAHSTHSTHSAHSTHTGHTGHTSLPQCINPFTNLPHTPRYYDILKKRLQLPVWEYKDRFTDILVRHQSFVLVGETGSGKTTQIPQWCVEYMRSLPGPKRGVACTQPRRVAAMSVAQRVADEMDVMLGQEVGYSIRFEDCSSAKTILKYMTDGMLLREAMNDPLLERYGVIILDEAHERTLATDILMGVLKEVVRQRSDLKVIVMSATLDAGKFQIYFDNCPLLTIPGRTHPVEIFYTPEPERDYLEAAIRTVIQIHMCEEEEGDLLLFLTGQEEIDEACKRIKREVDDLGPEVGDIKIIPLYSTLPPQQQQRIFEPPPPKKQNGAIGRKVVVSTNIAETSLTIDGVVFVIDPGFAKQKVYNPRIRVESLLVTAISKASAQQRAGRAGRTRPGKCFRLYTEKAYKTEMQDNTYPEILRSNLGSVVLQLKKLGIDDLVHFDFMDPPAPETLMRALELLNYLAALNDDGDLTELGSMMAEFPLDPQLAKMVIASCDYNCSNEVLSITAMLSVPQCFVRPTEAKKAADEAKMRFAHIDGDHLTLLNVYHAFKQNHESVQWCYDNFINYRSLMSADNVRQQLSRIMDRFNLPRRSTDFTSRDYYINIRKALVTGYFMQVAHLERTGHYLTVKDNQVVQLHPSTVLDHKPEWVLYNEFVLTTKNYIRTCTDIKPEWLVKIAPQYYDMSNFPQCEAKRQLDRIIAKLQSKEYSQY.

Positions methionine 1 to leucine 111 are disordered. Serine 15 carries the phosphoserine modification. Residues alanine 20–arginine 62 show a composition bias toward basic and acidic residues. Residues alanine 79 to serine 110 are compositionally biased toward low complexity. One can recognise a Helicase ATP-binding domain in the interval threonine 147–proline 313. Glycine 160–threonine 167 is an ATP binding site. Positions aspartate 260–histidine 263 match the DEAH box motif. Residues threonine 338 to glycine 518 enclose the Helicase C-terminal domain. Lysine 488 bears the N6-acetyllysine mark. Lysine 786 participates in a covalent cross-link: Glycyl lysine isopeptide (Lys-Gly) (interchain with G-Cter in SUMO2).

Belongs to the DEAD box helicase family. DEAH subfamily. DDX15/PRP43 sub-subfamily. Component of the U11/U12 snRNPs that are part of the U12-type spliceosome. Identified in the Intron Large spliceosome complex (IL, also named intron lariat spliceosome), a post-mRNA release spliceosomal complex containing the excised intron, U2, U5 and U6 snRNPs, and splicing factors; the association may be transient. The IL complex exists in two distinct conformations, one with the DHX15 (ILS2) and one without (ILS1). Interacts with TFIP11 (via G-patch domain); indicative for a recruitment to the IL complex. Interacts with SSB/La. Interacts with GPATCH2 (via G-patch domain); promoting the RNA helicase activity. Interacts with NKRF (via G-patch domain); promoting the RNA helicase activity. Interacts with NLRP6. In terms of tissue distribution, ubiquitous.

The protein localises to the nucleus. Its subcellular location is the nucleolus. It carries out the reaction ATP + H2O = ADP + phosphate + H(+). With respect to regulation, ATPase activity is enhanced upon binding to G-patch domain-containing proteins. G-patch domain-containing proteins act like a brace that tethers mobile sections of DHX15 together, stabilizing a functional conformation with high RNA affinity, thereby promoting the ATPase activity. Its function is as follows. RNA helicase involved in mRNA processing and antiviral innate immunity. Pre-mRNA processing factor involved in disassembly of spliceosomes after the release of mature mRNA. In cooperation with TFIP11 seem to be involved in the transition of the U2, U5 and U6 snRNP-containing IL complex to the snRNP-free IS complex leading to efficient debranching and turnover of excised introns. Plays a key role in antiviral innate immunity by promoting both MAVS-dependent signaling and NLRP6 inflammasome. Acts as an RNA virus sensor: recognizes and binds viral double stranded RNA (dsRNA) and activates the MAVS-dependent signaling to produce interferon-beta and interferon lambda-3 (IFNL3). Involved in intestinal antiviral innate immunity together with NLRP6: recognizes and binds viral dsRNA and promotes activation of the NLRP6 inflammasome in intestinal epithelial cells to restrict infection by enteric viruses. The NLRP6 inflammasome acts by promoting maturation and secretion of IL18 in the extracellular milieu. Also involved in antibacterial innate immunity by promoting Wnt-induced antimicrobial protein expression in Paneth cells. The polypeptide is ATP-dependent RNA helicase DHX15 (Mus musculus (Mouse)).